The following is a 679-amino-acid chain: NADPH--cytochrome P450 reductase (679 aa).

The Lumenal segment spans residues 1 to 21 (MADSHGDTGATMPEAAAQEAS). A helical membrane pass occupies residues 22–42 (VFSMTDVVLFSLIVGLITYWF). The Cytoplasmic segment spans residues 43–679 (LFRKKKEEVP…KGRYSLDVWS (637 aa)). Position 64 is a phosphoserine (Ser64). The Flavodoxin-like domain occupies 81–225 (IVVFYGSQTG…DFITWREQFW (145 aa)). FMN is bound by residues 87–92 (SQTGTA), 139–142 (ATYG), 174–183 (LGNKTYEHFN), and Asp209. The 243-residue stretch at 280 to 522 (KNPFLATVTT…FVRKSQFRLP (243 aa)) folds into the FAD-binding FR-type domain. Position 299 (Arg299) interacts with NADP(+). FAD contacts are provided by residues Arg425, 455-458 (RYYS), 473-475 (CAV), Tyr479, and 489-492 (GVAT). NADP(+)-binding positions include Thr536, 597 to 598 (SR), 603 to 607 (KVYVQ), and Asp640. FAD is bound at residue Trp678.

It belongs to the NADPH--cytochrome P450 reductase family. In the N-terminal section; belongs to the flavodoxin family. The protein in the C-terminal section; belongs to the flavoprotein pyridine nucleotide cytochrome reductase family. The cofactor is FAD. Requires FMN as cofactor.

Its subcellular location is the endoplasmic reticulum membrane. It carries out the reaction 2 oxidized [cytochrome P450] + NADPH = 2 reduced [cytochrome P450] + NADP(+) + H(+). Functionally, this enzyme is required for electron transfer from NADP to cytochrome P450 in microsomes. It can also provide electron transfer to heme oxygenase and cytochrome B5. The chain is NADPH--cytochrome P450 reductase from Oryctolagus cuniculus (Rabbit).